Consider the following 141-residue polypeptide: MTCVLKGCVNEVTVLGHETCSIGHANKLRKQVADMVGVTRRCAENNCGWFVCIIINDFTFDVYNCCGRSHLEKCRKRVEARNREIWKQIRRIQAESSSATRKKSHNSKNSKKKFKEDREFGAPKRFLRDDVPLGIDQLFVF.

The interval 95-116 is disordered; the sequence is ESSSATRKKSHNSKNSKKKFKE. Residues 100 to 113 show a composition bias toward basic residues; sequence TRKKSHNSKNSKKK.

This Tobacco rattle virus (strain PSG) protein is 16 kDa protein.